The sequence spans 437 residues: UDP-N-acetylmuramate--L-alanine ligase (437 aa).

Position 108-114 (108-114) interacts with ATP; the sequence is GAHGKTS.

It belongs to the MurCDEF family.

It is found in the cytoplasm. It carries out the reaction UDP-N-acetyl-alpha-D-muramate + L-alanine + ATP = UDP-N-acetyl-alpha-D-muramoyl-L-alanine + ADP + phosphate + H(+). The protein operates within cell wall biogenesis; peptidoglycan biosynthesis. Cell wall formation. The polypeptide is UDP-N-acetylmuramate--L-alanine ligase (Staphylococcus aureus).